The sequence spans 231 residues: Lipoprotein-releasing system ATP-binding protein LolD (231 aa).

Positions 11 to 231 (LRLEGLTRRF…TLRDGKLVPF (221 aa)) constitute an ABC transporter domain. ATP is bound at residue 47–54 (APSGTGKS).

The protein belongs to the ABC transporter superfamily. Lipoprotein translocase (TC 3.A.1.125) family. As to quaternary structure, the complex is composed of two ATP-binding proteins (LolD) and two transmembrane proteins (LolC and LolE).

It localises to the cell inner membrane. In terms of biological role, part of the ABC transporter complex LolCDE involved in the translocation of mature outer membrane-directed lipoproteins, from the inner membrane to the periplasmic chaperone, LolA. Responsible for the formation of the LolA-lipoprotein complex in an ATP-dependent manner. In Gluconobacter oxydans (strain 621H) (Gluconobacter suboxydans), this protein is Lipoprotein-releasing system ATP-binding protein LolD.